The chain runs to 301 residues: Probable 2-oxoglutarate-dependent dioxygenase AOP1 (301 aa).

Residues 158–262 (TYYLTRLMKY…RYSTGLFSIP (105 aa)) form the Fe2OG dioxygenase domain. Fe cation contacts are provided by H186, D188, and H243. Residue R253 coordinates 2-oxoglutarate.

Belongs to the iron/ascorbate-dependent oxidoreductase family. The cofactor is Fe(2+).

Its function is as follows. Probable 2-oxoglutarate-dependent dioxygenase that may be involved in glucosinolates biosynthesis. May play a role in the production of aliphatic glucosinolates. The protein is Probable 2-oxoglutarate-dependent dioxygenase AOP1 (AOP1) of Arabidopsis thaliana (Mouse-ear cress).